Here is a 543-residue protein sequence, read N- to C-terminus: Cytochrome P450 52A1 (543 aa).

Over 1–28 (MSSSPSIAQEFLATITPYVEYCQENYTK) the chain is Lumenal. Residues 29 to 48 (WYYFIPLVILSLNLISMLHT) traverse the membrane as a helical segment. Over 49 to 543 (KYLERKFKAK…GAEVQMYLIL (495 aa)) the chain is Cytoplasmic. Residue Cys-487 coordinates heme.

The protein belongs to the cytochrome P450 family. Heme is required as a cofactor.

It is found in the endoplasmic reticulum membrane. Functionally, together with an NADPH cytochrome P450 the enzyme system catalyzes the terminal hydroxylation as the first step in the assimilation of alkanes and fatty acids. The sequence is that of Cytochrome P450 52A1 (CYP52A1) from Candida tropicalis (Yeast).